Here is a 93-residue protein sequence, read N- to C-terminus: Small ribosomal subunit protein uS17 (93 aa).

It belongs to the universal ribosomal protein uS17 family. In terms of assembly, part of the 30S ribosomal subunit.

In terms of biological role, one of the primary rRNA binding proteins, it binds specifically to the 5'-end of 16S ribosomal RNA. This is Small ribosomal subunit protein uS17 from Bordetella bronchiseptica (strain ATCC BAA-588 / NCTC 13252 / RB50) (Alcaligenes bronchisepticus).